We begin with the raw amino-acid sequence, 273 residues long: Anthranilate synthase beta subunit 2, chloroplastic (273 aa).

A chloroplast-targeting transit peptide spans 1-47; the sequence is MATAARLLPKIQSPASPAVAEARRRRPSSLRLGVTSGPARTLKQKLV. The interval 15-35 is disordered; sequence ASPAVAEARRRRPSSLRLGVT. Residues 70–269 enclose the Glutamine amidotransferase type-1 domain; the sequence is PIIVIDNYDS…IKIIEGYEAL (200 aa). 121 to 123 lines the L-glutamine pocket; that stretch reads GPG. Cys148 (nucleophile) is an active-site residue. L-glutamine-binding positions include Gln152 and 202–203; that span reads SL. Residues His243 and Glu245 contribute to the active site.

As to quaternary structure, heterotetramer consisting of two non-identical subunits: a beta subunit and a large alpha subunit. Expressed in roots and leaves.

It is found in the plastid. It localises to the chloroplast. The catalysed reaction is chorismate + L-glutamine = anthranilate + pyruvate + L-glutamate + H(+). The protein operates within amino-acid biosynthesis; L-tryptophan biosynthesis; L-tryptophan from chorismate: step 1/5. In terms of biological role, part of a heterotetrameric complex that catalyzes the two-step biosynthesis of anthranilate, an intermediate in the biosynthesis of L-tryptophan. In the first step, the glutamine-binding beta subunit of anthranilate synthase (AS) provides the glutamine amidotransferase activity which generates ammonia as a substrate that, along with chorismate, is used in the second step, catalyzed by the large alpha subunit of AS to produce anthranilate. The polypeptide is Anthranilate synthase beta subunit 2, chloroplastic (Oryza sativa subsp. japonica (Rice)).